We begin with the raw amino-acid sequence, 90 residues long: Probable Fe(2+)-trafficking protein (90 aa).

The protein belongs to the Fe(2+)-trafficking protein family.

Could be a mediator in iron transactions between iron acquisition and iron-requiring processes, such as synthesis and/or repair of Fe-S clusters in biosynthetic enzymes. This is Probable Fe(2+)-trafficking protein from Pseudomonas fluorescens (strain SBW25).